A 141-amino-acid chain; its full sequence is Endoribonuclease YbeY (141 aa).

Zn(2+) contacts are provided by histidine 107, histidine 111, and aspartate 117.

This sequence belongs to the endoribonuclease YbeY family. Zn(2+) is required as a cofactor.

The protein localises to the cytoplasm. Its function is as follows. Single strand-specific metallo-endoribonuclease involved in late-stage 70S ribosome quality control and in maturation of the 3' terminus of the 16S rRNA. This is Endoribonuclease YbeY from Endomicrobium trichonymphae.